Here is a 422-residue protein sequence, read N- to C-terminus: UDP-N-acetylglucosamine 1-carboxyvinyltransferase (422 aa).

Phosphoenolpyruvate is bound at residue 22 to 23 (KN). Position 93 (R93) interacts with UDP-N-acetyl-alpha-D-glucosamine. C117 serves as the catalytic Proton donor. C117 carries the post-translational modification 2-(S-cysteinyl)pyruvic acid O-phosphothioketal. UDP-N-acetyl-alpha-D-glucosamine is bound by residues 122–126 (RPVDL), 162–165 (KVSV), D307, and I329.

The protein belongs to the EPSP synthase family. MurA subfamily.

Its subcellular location is the cytoplasm. It catalyses the reaction phosphoenolpyruvate + UDP-N-acetyl-alpha-D-glucosamine = UDP-N-acetyl-3-O-(1-carboxyvinyl)-alpha-D-glucosamine + phosphate. It participates in cell wall biogenesis; peptidoglycan biosynthesis. Cell wall formation. Adds enolpyruvyl to UDP-N-acetylglucosamine. The chain is UDP-N-acetylglucosamine 1-carboxyvinyltransferase from Hamiltonella defensa subsp. Acyrthosiphon pisum (strain 5AT).